A 350-amino-acid chain; its full sequence is uncharacterized protein (350 aa).

One can recognise an OBG-type G domain in the interval 171–334; sequence PTVVIAGYPN…LKERLKKIAI (164 aa). Residues 177–184, 219–223, and 286–289 contribute to the GTP site; these read GYPNVGKS, DTPGL, and NKID.

Belongs to the TRAFAC class OBG-HflX-like GTPase superfamily. OBG GTPase family. NOG subfamily.

This is an uncharacterized protein from Methanocaldococcus jannaschii (strain ATCC 43067 / DSM 2661 / JAL-1 / JCM 10045 / NBRC 100440) (Methanococcus jannaschii).